The chain runs to 468 residues: 6-phospho-beta-galactosidase (468 aa).

Positions 19, 116, 159, 160, and 297 each coordinate D-galactose 6-phosphate. Glu-160 (proton donor) is an active-site residue. The active-site Nucleophile is the Glu-375. D-galactose 6-phosphate contacts are provided by Ser-428, Trp-429, Lys-435, and Tyr-437.

This sequence belongs to the glycosyl hydrolase 1 family.

The enzyme catalyses a 6-phospho-beta-D-galactoside + H2O = D-galactose 6-phosphate + an alcohol. It participates in carbohydrate metabolism; lactose degradation; D-galactose 6-phosphate and beta-D-glucose from lactose 6-phosphate: step 1/1. This Streptococcus pyogenes serotype M18 (strain MGAS8232) protein is 6-phospho-beta-galactosidase.